Consider the following 72-residue polypeptide: Translation initiation factor IF-1 (72 aa).

Residues 1 to 72 (MAKQSAIEQD…SKGRIVFRYK (72 aa)) enclose the S1-like domain.

This sequence belongs to the IF-1 family. Component of the 30S ribosomal translation pre-initiation complex which assembles on the 30S ribosome in the order IF-2 and IF-3, IF-1 and N-formylmethionyl-tRNA(fMet); mRNA recruitment can occur at any time during PIC assembly.

The protein localises to the cytoplasm. Functionally, one of the essential components for the initiation of protein synthesis. Stabilizes the binding of IF-2 and IF-3 on the 30S subunit to which N-formylmethionyl-tRNA(fMet) subsequently binds. Helps modulate mRNA selection, yielding the 30S pre-initiation complex (PIC). Upon addition of the 50S ribosomal subunit IF-1, IF-2 and IF-3 are released leaving the mature 70S translation initiation complex. This Bacteroides fragilis (strain ATCC 25285 / DSM 2151 / CCUG 4856 / JCM 11019 / LMG 10263 / NCTC 9343 / Onslow / VPI 2553 / EN-2) protein is Translation initiation factor IF-1.